Reading from the N-terminus, the 562-residue chain is Probable ganciclovir kinase (562 aa).

Polar residues predominate over residues 1 to 16 (MDNGVETPQGQKTQPI). A disordered region spans residues 1–32 (MDNGVETPQGQKTQPINLPPVRKKLRKHEGLG). ATP-binding positions include 201-209 (LGVGAYGKV) and Lys218. The active-site Proton acceptor is Asp313.

Belongs to the protein kinase superfamily. Tyr protein kinase family. HCMV ganciclovir subfamily.

Phosphorylates the antiviral nucleoside analog ganciclovir. In Homo sapiens (Human), this protein is Probable ganciclovir kinase (U69).